A 320-amino-acid chain; its full sequence is Heterogeneous nuclear ribonucleoprotein A1 (320 aa).

Position 1 is an N-acetylmethionine (Met1). Ser2 carries the post-translational modification N-acetylserine; in Heterogeneous nuclear ribonucleoprotein A1, N-terminally processed. Ser2 is modified (phosphoserine). Lys3 bears the N6-acetyllysine; alternate mark. Residue Lys3 forms a Glycyl lysine isopeptide (Lys-Gly) (interchain with G-Cter in SUMO2); alternate linkage. Ser4 and Ser6 each carry phosphoserine. Residues 4-94 (SESPKEPEQL…EPKRAVSRED (91 aa)) are globular A domain. Lys8 participates in a covalent cross-link: Glycyl lysine isopeptide (Lys-Gly) (interchain with G-Cter in SUMO2). RRM domains are found at residues 14–97 (RKLF…DSQR) and 105–184 (KKIF…LSKQ). Ser22 is modified (phosphoserine). A Glycyl lysine isopeptide (Lys-Gly) (interchain with G-Cter in SUMO2) cross-link involves residue Lys78. Positions 95 to 185 (SQRPGAHLTV…EVRKALSKQE (91 aa)) are globular B domain. Lys113 is covalently cross-linked (Glycyl lysine isopeptide (Lys-Gly) (interchain with G-Cter in SUMO)). Glycyl lysine isopeptide (Lys-Gly) (interchain with G-Cter in SUMO2) cross-links involve residues Lys179 and Lys183. The interval 182 to 216 (SKQEMASASSSQRGRSGSGNFGGGRGGGFGGNDNF) is disordered. Ser192 is subject to Phosphoserine; by MKNK2. Arg194 carries the asymmetric dimethylarginine; alternate modification. Arg194 carries the dimethylated arginine; alternate modification. Residue Arg194 is modified to Omega-N-methylarginine; alternate. Residues 197–216 (SGSGNFGGGRGGGFGGNDNF) show a composition bias toward gly residues. Ser199 is modified (phosphoserine). Arg206, Arg218, Arg225, and Arg232 each carry asymmetric dimethylarginine; alternate. Arg206 is subject to Dimethylated arginine; alternate. Omega-N-methylarginine; alternate is present on residues Arg206, Arg218, Arg225, and Arg232. The RNA-binding RGG-box stretch occupies residues 218–240 (RGGNFSGRGGFGGSRGGGGYGGS). Arg225 is modified (dimethylated arginine; alternate). Positions 268-305 (NQSSNFGPMKGGNFGGRSSGPYGGGGQYFAKPRNQGGY) are nuclear targeting sequence. The segment at 274–320 (GPMKGGNFGGRSSGPYGGGGQYFAKPRNQGGYGGSSSSSSYGSGRRF) is disordered. Over residues 276–294 (MKGGNFGGRSSGPYGGGGQ) the composition is skewed to gly residues. An Omega-N-methylarginine modification is found at Arg284. The residue at position 285 (Ser285) is a Phosphoserine. The residue at position 298 (Lys298) is an N6-acetyllysine; alternate. Lys298 is covalently cross-linked (Glycyl lysine isopeptide (Lys-Gly) (interchain with G-Cter in SUMO2); alternate). Arg300 is subject to Omega-N-methylarginine. Over residues 308 to 320 (SSSSSSYGSGRRF) the composition is skewed to low complexity. Ser309 bears the Phosphoserine mark. Phosphoserine; by MKNK2 occurs at positions 310, 311, and 312. Residues Ser313 and Ser316 each carry the phosphoserine modification. At Arg318 the chain carries Omega-N-methylarginine.

As to quaternary structure, identified in the spliceosome C complex. Identified in a IGF2BP1-dependent mRNP granule complex containing untranslated mRNAs. Interacts with SEPT6. Interacts with C9orf72. Interacts with KHDRBS1. Interacts with UBQLN2. Interacts with PPIA/CYPA. Sumoylated.

It is found in the nucleus. Its subcellular location is the cytoplasm. Functionally, involved in the packaging of pre-mRNA into hnRNP particles, transport of poly(A) mRNA from the nucleus to the cytoplasm and modulation of splice site selection. Plays a role in the splicing of pyruvate kinase PKM by binding repressively to sequences flanking PKM exon 9, inhibiting exon 9 inclusion and resulting in exon 10 inclusion and production of the PKM M2 isoform. Binds to the IRES and thereby inhibits the translation of the apoptosis protease activating factor APAF1. May bind to specific miRNA hairpins. This chain is Heterogeneous nuclear ribonucleoprotein A1 (Hnrnpa1), found in Mus musculus (Mouse).